Here is a 56-residue protein sequence, read N- to C-terminus: MGHANIWYSHPRRYGQGSRSCRSCSNRHGLIRKYGLNICRQCFREYAHDIGFKKLD.

Positions 21, 24, 39, and 42 each coordinate Zn(2+).

It belongs to the universal ribosomal protein uS14 family. Component of the 40S small ribosomal subunit. The cofactor is Zn(2+).

The protein localises to the cytoplasm. It is found in the cytosol. It localises to the rough endoplasmic reticulum. The sequence is that of Small ribosomal subunit protein uS14 (RpS29) from Bombyx mori (Silk moth).